We begin with the raw amino-acid sequence, 372 residues long: UDP-N-acetylglucosamine 2-epimerase (372 aa).

Substrate contacts are provided by residues arginine 10, lysine 15, aspartate 95, glutamate 117, histidine 212, glutamine 270, phenylalanine 275, 289 to 291 (SGG), glutamate 295, and arginine 312.

This sequence belongs to the UDP-N-acetylglucosamine 2-epimerase family.

The enzyme catalyses UDP-N-acetyl-alpha-D-glucosamine = UDP-N-acetyl-alpha-D-mannosamine. Its pathway is capsule biogenesis; capsule polysaccharide biosynthesis. With respect to regulation, activated by UDP-GlcNAc and inhibited by 2-acetamidoglucal and UDP. Activity is strongly decreased in the presence of Co(2+) and abolished in the presence of Mn(2+) or Zn(2+). Functionally, catalyzes the interconversion between UDP-N-acetylglucosamine (UDP-GlcNAc) and UDP-N-acetylmannosamine (UDP-ManNAc). Involved in the biosynthesis of the capsular polysaccharides. In vitro, can also use several chemoenzymatically synthesized UDP-ManNAc derivatives as substrates, with lower efficiency. In Neisseria meningitidis serogroup A / serotype 4A (strain DSM 15465 / Z2491), this protein is UDP-N-acetylglucosamine 2-epimerase.